The following is a 305-amino-acid chain: Ribonuclease BN (305 aa).

The Zn(2+) site is built by histidine 64, histidine 66, aspartate 68, histidine 69, histidine 141, aspartate 212, and histidine 270. Aspartate 68 functions as the Proton acceptor in the catalytic mechanism.

This sequence belongs to the RNase Z family. RNase BN subfamily. Homodimer. It depends on Zn(2+) as a cofactor.

In terms of biological role, zinc phosphodiesterase, which has both exoribonuclease and endoribonuclease activities. This chain is Ribonuclease BN, found in Shigella flexneri.